Reading from the N-terminus, the 150-residue chain is Large ribosomal subunit protein uL13 (150 aa).

A disordered region spans residues 130-150; sequence EHPHGAQQPQPYQLNPSASIK. The segment covering 136–150 has biased composition (polar residues); the sequence is QQPQPYQLNPSASIK.

It belongs to the universal ribosomal protein uL13 family. Part of the 50S ribosomal subunit.

This protein is one of the early assembly proteins of the 50S ribosomal subunit, although it is not seen to bind rRNA by itself. It is important during the early stages of 50S assembly. The protein is Large ribosomal subunit protein uL13 of Synechococcus sp. (strain RCC307).